We begin with the raw amino-acid sequence, 368 residues long: Molybdenum import ATP-binding protein ModC (368 aa).

Residues 1–230 (MTIKIQFKQT…HAMRPWQSFS (230 aa)) enclose the ABC transporter domain. 32 to 39 (GRSGAGKT) provides a ligand contact to ATP. The region spanning 291-362 (ATSIRNVLPA…VKGVSVTQRD (72 aa)) is the Mop domain.

The protein belongs to the ABC transporter superfamily. Molybdate importer (TC 3.A.1.8) family. The complex is composed of two ATP-binding proteins (ModC), two transmembrane proteins (ModB) and a solute-binding protein (ModA).

It localises to the cell inner membrane. It carries out the reaction molybdate(out) + ATP + H2O = molybdate(in) + ADP + phosphate + H(+). Its function is as follows. Part of the ABC transporter complex ModABC involved in molybdenum import. Responsible for energy coupling to the transport system. This Vibrio parahaemolyticus serotype O3:K6 (strain RIMD 2210633) protein is Molybdenum import ATP-binding protein ModC.